The sequence spans 275 residues: NH(3)-dependent NAD(+) synthetase (275 aa).

Position 50–57 (50–57 (GISGGVDS)) interacts with ATP. Asp-56 is a binding site for Mg(2+). Arg-147 is a deamido-NAD(+) binding site. Thr-167 is a binding site for ATP. Glu-172 serves as a coordination point for Mg(2+). 2 residues coordinate deamido-NAD(+): Lys-180 and Asp-187. ATP contacts are provided by Lys-196 and Thr-218. 267–268 (HK) contacts deamido-NAD(+).

It belongs to the NAD synthetase family. As to quaternary structure, homodimer.

The enzyme catalyses deamido-NAD(+) + NH4(+) + ATP = AMP + diphosphate + NAD(+) + H(+). Its pathway is cofactor biosynthesis; NAD(+) biosynthesis; NAD(+) from deamido-NAD(+) (ammonia route): step 1/1. In terms of biological role, catalyzes the ATP-dependent amidation of deamido-NAD to form NAD. Uses ammonia as a nitrogen source. This Pseudomonas syringae pv. tomato (strain ATCC BAA-871 / DC3000) protein is NH(3)-dependent NAD(+) synthetase.